A 416-amino-acid chain; its full sequence is MTSTLPSQPKDMELANSSRPSVHGRFGRFGGQYVPETLMPALAELEKKAAEAWQDSSFTNELSHLLKTYVGRATPLYEAKRLSQHYMSREGGPRIWLKREDLNHTGAHKINNALGQALLAIRMGKKRIIAETGAGQHGVATATVCARFGLECVIYMGQEDMERQALNVFRMKLLGAKVQSVTAGTATLKDATSEAIRDWVTNVESTHYILGSVAGPHPYPMLVRDFHSVIGEETKQQCKEAFGRSPDVLLACVGGGSNAMGLFHSFIEDLSVKMIGVEAAGDGVNTKRHAATITQGSVGVLHGAMSLLLQDSDGQVQEAHSISAGLDYPGVGPEHSYLNEIGRAEYVAVTDKEALNALELVSKLEGIIPALETAHAFAWLDTLCPSLAPGTEIVINCSGRGDKDVNTVAKKMGFEI.

The interval 1–23 is disordered; sequence MTSTLPSQPKDMELANSSRPSVH. K109 carries the post-translational modification N6-(pyridoxal phosphate)lysine.

Belongs to the TrpB family. In terms of assembly, tetramer of two alpha and two beta chains. It depends on pyridoxal 5'-phosphate as a cofactor.

The enzyme catalyses (1S,2R)-1-C-(indol-3-yl)glycerol 3-phosphate + L-serine = D-glyceraldehyde 3-phosphate + L-tryptophan + H2O. Its pathway is amino-acid biosynthesis; L-tryptophan biosynthesis; L-tryptophan from chorismate: step 5/5. In terms of biological role, the beta subunit is responsible for the synthesis of L-tryptophan from indole and L-serine. This Prochlorococcus marinus (strain MIT 9211) protein is Tryptophan synthase beta chain.